The sequence spans 477 residues: MEWEPVIGLEVHVQLRTQSKIFSGAATAYGAEPNTQACAIDLGLPGVLPVLNKEAVKLAVCFGLSVNASIPPYSIFARKNYFYPDLPKGYQISQYNFPIVQNGHLDIENEDGTTKRIGITRAHLEEDAGKSFHEGMQGYSGIDFNRAGTPLLEIVSEPDIRSAQEAVAYLKALHSLVRYIGVSDANMQEGAFRCDVNISLRPKSEEKFGTRAEIKNVNSFRFVERAILFEINRQKEILENGGTIVQETRLYDAVQDETRSMRTKEEAHDYRYFPDPDLLPVEIGPEFIEAVKNQLPELPWEKRKRFAASYQLSNYDVKLLTTQIEIANYFETVLKIDKTIPPKLAANWINGDLAAALNKNNLSITQSPINAEQLAGLLHRIADNTLSGSMGKQVFETMWGGEGDADTIIERHGLKQITDTEALEKIIDEVIENNPTQVEQYRSGKDKLIAFFVGQVMKATKGKANPQQVNELFKKKL.

The protein belongs to the GatB/GatE family. GatB subfamily. In terms of assembly, heterotrimer of A, B and C subunits.

The enzyme catalyses L-glutamyl-tRNA(Gln) + L-glutamine + ATP + H2O = L-glutaminyl-tRNA(Gln) + L-glutamate + ADP + phosphate + H(+). It carries out the reaction L-aspartyl-tRNA(Asn) + L-glutamine + ATP + H2O = L-asparaginyl-tRNA(Asn) + L-glutamate + ADP + phosphate + 2 H(+). Functionally, allows the formation of correctly charged Asn-tRNA(Asn) or Gln-tRNA(Gln) through the transamidation of misacylated Asp-tRNA(Asn) or Glu-tRNA(Gln) in organisms which lack either or both of asparaginyl-tRNA or glutaminyl-tRNA synthetases. The reaction takes place in the presence of glutamine and ATP through an activated phospho-Asp-tRNA(Asn) or phospho-Glu-tRNA(Gln). The protein is Aspartyl/glutamyl-tRNA(Asn/Gln) amidotransferase subunit B of Coxiella burnetii (strain RSA 493 / Nine Mile phase I).